Here is a 906-residue protein sequence, read N- to C-terminus: Protein translocase subunit SecA (906 aa).

ATP contacts are provided by residues Gln89, 107–111, and Asp502; that span reads GEGKT. Residues Cys890, Cys892, Cys901, and His902 each contribute to the Zn(2+) site.

It belongs to the SecA family. In terms of assembly, monomer and homodimer. Part of the essential Sec protein translocation apparatus which comprises SecA, SecYEG and auxiliary proteins SecDF-YajC and YidC. It depends on Zn(2+) as a cofactor.

It localises to the cell inner membrane. The protein resides in the cytoplasm. It catalyses the reaction ATP + H2O + cellular proteinSide 1 = ADP + phosphate + cellular proteinSide 2.. Its function is as follows. Part of the Sec protein translocase complex. Interacts with the SecYEG preprotein conducting channel. Has a central role in coupling the hydrolysis of ATP to the transfer of proteins into and across the cell membrane, serving both as a receptor for the preprotein-SecB complex and as an ATP-driven molecular motor driving the stepwise translocation of polypeptide chains across the membrane. The sequence is that of Protein translocase subunit SecA from Brucella canis (strain ATCC 23365 / NCTC 10854 / RM-666).